A 625-amino-acid polypeptide reads, in one-letter code: Mesothelin (625 aa).

The signal sequence occupies residues 1–35 (MALPTAQPLLGSCGSPICSRSFLLLLLSLGWLPLL). Ser202 is modified (phosphoserine). Cys304 and Cys328 are joined by a disulfide. N-linked (GlcNAc...) asparagine glycosylation is found at Asn390, Asn488, and Asn517. Ser600 carries the GPI-anchor amidated serine lipid modification. The propeptide at 601–625 (SGAPLLGPGFVFAWIPALLSALRLS) is removed in mature form.

It belongs to the mesothelin family. Interacts with MUC16. In terms of processing, proteolytically cleaved by a furin-like convertase to generate megakaryocyte-potentiating factor (MPF), and the cleaved form of mesothelin. In terms of tissue distribution, specifically expressed in lung. Overexpressed in hereditary renal carcinoma developed by Eker rats.

Its subcellular location is the cell membrane. It localises to the golgi apparatus. It is found in the secreted. Functionally, membrane-anchored forms may play a role in cellular adhesion. Megakaryocyte-potentiating factor (MPF) may potentiate megakaryocyte colony formation. The polypeptide is Mesothelin (Msln) (Rattus norvegicus (Rat)).